The following is a 571-amino-acid chain: Sulfite reductase [NADPH] hemoprotein beta-component (571 aa).

Positions 435, 441, 480, and 484 each coordinate [4Fe-4S] cluster. Cysteine 484 is a siroheme binding site.

The protein belongs to the nitrite and sulfite reductase 4Fe-4S domain family. Alpha(8)-beta(8). The alpha component is a flavoprotein, the beta component is a hemoprotein. The cofactor is siroheme. It depends on [4Fe-4S] cluster as a cofactor.

It carries out the reaction hydrogen sulfide + 3 NADP(+) + 3 H2O = sulfite + 3 NADPH + 4 H(+). It participates in sulfur metabolism; hydrogen sulfide biosynthesis; hydrogen sulfide from sulfite (NADPH route): step 1/1. Component of the sulfite reductase complex that catalyzes the 6-electron reduction of sulfite to sulfide. This is one of several activities required for the biosynthesis of L-cysteine from sulfate. This chain is Sulfite reductase [NADPH] hemoprotein beta-component, found in Erwinia tasmaniensis (strain DSM 17950 / CFBP 7177 / CIP 109463 / NCPPB 4357 / Et1/99).